Here is a 398-residue protein sequence, read N- to C-terminus: Streptopain (398 aa).

The signal sequence occupies residues 1–27 (MNKKKLGIRLLSLLALGGFVLANPVFA). Residues 28-145 (DQNFARNEKE…TTYAGTAEIK (118 aa)) constitute a propeptide that is removed on maturation. The active-site Nucleophile is C192. A Cysteine methyl disulfide; in zymogen form modification is found at C192. Positions 282 and 339 each coordinate a protein. H340 acts as the Proton acceptor in catalysis. Residues 368-390 (RLDALNPSALGTGGGAGGFNGYQ) form a C-terminal active site loop region.

This sequence belongs to the peptidase C10 family. Monomer. The mature protease is derived from the precursor sequence by cleavage, either in cis via an autocatalytic mechanism, or in trans by mature SpeB or host proteases (trypsin, plasmin or subtilisin). Maturation can involve a number of protein cleavage intermediates. Mature SpeB probably plays the most important role in protein maturation in physiological conditions. In terms of processing, methylthiolation at Cys-192 of the inactive zymogen form is probably involved in the mechanism of secretion of the proteinase into the culture fluid.

It is found in the secreted. The protein resides in the host extracellular space. Its subcellular location is the host cytoplasm. The enzyme catalyses Preferential cleavage with hydrophobic residues at P2, P1 and P1'.. Synthesized as an inactive zymogen to protect the intracellular components of the bacteria from proteolytic activity during protein production. Once secreted into the extracellular milieu, cleaved into the active protease: maturation can be mediated in cis by autocatalytic cleavage, or in trans by mature SpeB or host proteases. Protease activity is strongly inhibited by zinc and copper, which prevent its maturation into an active protease: inhibition by metal ions may be required to prevent proteolysis of streptococcal proteins. Functionally, cysteine protease that acts as a key streptococcal virulence factor by cleaving host proteins involved in immune response. Triggers inflammation by mediating cleavage of host proteins, which can both promote host pathogenesis by triggering sterile inflammation and/or restrict streptococcal infection, depending on host immune statue and infection site. Cleaves host gasdermin-A (GSDMA) in epithelial cells, promoting GSDMA activation and formation of gasdermin pores, triggering pyroptosis. Pyroptosis triggers the elimination of the infected skin cell, depriving the pathogen of its protective niche, while inducing an inflammatory response. This ultimately prevents bacterial penetration of the epithelial barrier and a subsequent systemic dissemination of the pathogen. Also mediates cleavage of the cytokine precursor interleukin-1 beta (IL1B) to its mature form, resulting in inflammation and septic shock. SpeB-mediated maturation of IL1B plays a dual role depending on infection site: while IL1B inflammatory response prevents bacterial growth during invasive skin infections, it promotes streptococcal infection of the nasopharynx by disrupting colonization resistance mediated by the microbiota. Inhibits host autophagy be catalyzing cleavage and inactivation of key autophagy factors, such as CALCOCO2, NBR1 and SQSTM1. Cleaves and inhibits a number of complement factors, such as C2, C3-beta chain of C3, C4, C5 or SERPING1, thereby promoting evasion of host immunity. May also impair adaptive immunity by catalyzing cleavage and degradation of host immunoglobulins to promote immune system evasion; the relevance of this activity is however unsure in vivo. Catalyzes maturation and release of the peptide hormone bradykinin from the precursor Kininogen-1 (KNG1) to produce hypotension during septic shock. Also involved in bacterial translocation across the host epithelial barrier by mediating cleavage and degradation of host epithelial junction proteins, such as CDH1 and OCLN. Additionally, has been involved in degradation of fibronectin and vitronectin, two host extracellular matrix proteins involved in tissue integrity. Also able to catalyze cleavage and degradation of streptococcal proteins, such as C5a peptidase, EndoS or SmeZ. Degradation of streptococcal proteins is however strictly regulated to preserve integrity of other virulence factors. This is Streptopain (speB) from Streptococcus pyogenes serotype M3 (strain ATCC BAA-595 / MGAS315).